The primary structure comprises 136 residues: Protein BUNDLE SHEATH DEFECTIVE 2, chloroplastic (136 aa).

A chloroplast-targeting transit peptide spans 1–56 (MANSLCFFSSPPTFCFQSPSKNPKPSHFFSTNDNTSSLVQKRELLQTSRSQSFEVK). The CR-type zinc-finger motif lies at 62-133 (PQGTKPNSLV…AGFIGGFLST (72 aa)). 11 residues coordinate Zn(2+): Cys-72, Cys-75, Glu-78, Cys-80, Cys-83, Cys-86, Cys-107, Cys-110, Glu-115, Cys-118, and Cys-121.

The protein belongs to the BSD2 chaperone family. As to quaternary structure, interacts with the RuBisCo large subunit (RbcL) assembled as an intermediate complex made of eight RbcL and eight BSD2 subunits.

Its subcellular location is the plastid. The protein resides in the chloroplast stroma. In terms of biological role, chloroplast chaperone required for RuBisCo biogenesis and translational regulation of the RuBisCo large subunit (RbcL). Stabilizes an end-state assembly intermediate of eight RbcL subunits until the small subunits (RBCSs) become available to produce a complete stable RuBisCo complex containing eight small and eight large subunits. The protein is Protein BUNDLE SHEATH DEFECTIVE 2, chloroplastic of Arabidopsis thaliana (Mouse-ear cress).